We begin with the raw amino-acid sequence, 89 residues long: Cell division protein ZapA (89 aa).

This sequence belongs to the ZapA family. Type 2 subfamily. Homodimer. Interacts with FtsZ.

The protein resides in the cytoplasm. In terms of biological role, activator of cell division through the inhibition of FtsZ GTPase activity, therefore promoting FtsZ assembly into bundles of protofilaments necessary for the formation of the division Z ring. It is recruited early at mid-cell but it is not essential for cell division. The protein is Cell division protein ZapA of Bacillus mycoides (strain KBAB4) (Bacillus weihenstephanensis).